Consider the following 94-residue polypeptide: Co-chaperonin GroES (94 aa).

This sequence belongs to the GroES chaperonin family. Heptamer of 7 subunits arranged in a ring. Interacts with the chaperonin GroEL.

The protein localises to the cytoplasm. In terms of biological role, together with the chaperonin GroEL, plays an essential role in assisting protein folding. The GroEL-GroES system forms a nano-cage that allows encapsulation of the non-native substrate proteins and provides a physical environment optimized to promote and accelerate protein folding. GroES binds to the apical surface of the GroEL ring, thereby capping the opening of the GroEL channel. The polypeptide is Co-chaperonin GroES (Exiguobacterium sibiricum (strain DSM 17290 / CCUG 55495 / CIP 109462 / JCM 13490 / 255-15)).